A 63-amino-acid polypeptide reads, in one-letter code: MKAQELRNKNVEELNAELINLLGEQFKLRMQAATGQLQQTHQLKQVRRSIAQVKTVLTEKAGE.

This sequence belongs to the universal ribosomal protein uL29 family.

The protein is Large ribosomal subunit protein uL29 of Actinobacillus pleuropneumoniae serotype 5b (strain L20).